Consider the following 467-residue polypeptide: Methylenetetrahydrofolate--tRNA-(uracil-5-)-methyltransferase TrmFO (467 aa).

FAD is bound at residue 10–15 (GGGMAG).

Belongs to the MnmG family. TrmFO subfamily. FAD is required as a cofactor.

The protein localises to the cytoplasm. It catalyses the reaction uridine(54) in tRNA + (6R)-5,10-methylene-5,6,7,8-tetrahydrofolate + NADH + H(+) = 5-methyluridine(54) in tRNA + (6S)-5,6,7,8-tetrahydrofolate + NAD(+). The catalysed reaction is uridine(54) in tRNA + (6R)-5,10-methylene-5,6,7,8-tetrahydrofolate + NADPH + H(+) = 5-methyluridine(54) in tRNA + (6S)-5,6,7,8-tetrahydrofolate + NADP(+). Functionally, catalyzes the folate-dependent formation of 5-methyl-uridine at position 54 (M-5-U54) in all tRNAs. This Hyphomonas neptunium (strain ATCC 15444) protein is Methylenetetrahydrofolate--tRNA-(uracil-5-)-methyltransferase TrmFO.